Reading from the N-terminus, the 86-residue chain is Large ribosomal subunit protein eL20 (86 aa).

Belongs to the eukaryotic ribosomal protein eL20 family. Part of the 50S ribosomal subunit. Binds 23S rRNA.

The polypeptide is Large ribosomal subunit protein eL20 (Saccharolobus solfataricus (strain ATCC 35092 / DSM 1617 / JCM 11322 / P2) (Sulfolobus solfataricus)).